The sequence spans 235 residues: Phosphatidylserine decarboxylase proenzyme (235 aa).

Ser204 acts as the Schiff-base intermediate with substrate; via pyruvic acid in catalysis. Pyruvic acid (Ser); by autocatalysis is present on Ser204.

Belongs to the phosphatidylserine decarboxylase family. PSD-A subfamily. Heterodimer of a large membrane-associated beta subunit and a small pyruvoyl-containing alpha subunit. It depends on pyruvate as a cofactor. Is synthesized initially as an inactive proenzyme. Formation of the active enzyme involves a self-maturation process in which the active site pyruvoyl group is generated from an internal serine residue via an autocatalytic post-translational modification. Two non-identical subunits are generated from the proenzyme in this reaction, and the pyruvate is formed at the N-terminus of the alpha chain, which is derived from the carboxyl end of the proenzyme. The post-translation cleavage follows an unusual pathway, termed non-hydrolytic serinolysis, in which the side chain hydroxyl group of the serine supplies its oxygen atom to form the C-terminus of the beta chain, while the remainder of the serine residue undergoes an oxidative deamination to produce ammonia and the pyruvoyl prosthetic group on the alpha chain.

Its subcellular location is the cell membrane. The enzyme catalyses a 1,2-diacyl-sn-glycero-3-phospho-L-serine + H(+) = a 1,2-diacyl-sn-glycero-3-phosphoethanolamine + CO2. It functions in the pathway phospholipid metabolism; phosphatidylethanolamine biosynthesis; phosphatidylethanolamine from CDP-diacylglycerol: step 2/2. In terms of biological role, catalyzes the formation of phosphatidylethanolamine (PtdEtn) from phosphatidylserine (PtdSer). This chain is Phosphatidylserine decarboxylase proenzyme, found in Mycobacterium sp. (strain KMS).